The chain runs to 87 residues: Small ribosomal subunit protein uS17 (87 aa).

This sequence belongs to the universal ribosomal protein uS17 family. In terms of assembly, part of the 30S ribosomal subunit.

In terms of biological role, one of the primary rRNA binding proteins, it binds specifically to the 5'-end of 16S ribosomal RNA. The polypeptide is Small ribosomal subunit protein uS17 (Bacillus licheniformis (strain ATCC 14580 / DSM 13 / JCM 2505 / CCUG 7422 / NBRC 12200 / NCIMB 9375 / NCTC 10341 / NRRL NRS-1264 / Gibson 46)).